A 543-amino-acid chain; its full sequence is CBS domain-containing protein CBSCBSPB1 (543 aa).

The segment at 1–35 is disordered; that stretch reads MASQGGPRRSLSVTTASLHGKKKSMDMAERGLDTG. Position 17 is a phosphoserine (S17). Positions 23–35 are enriched in basic and acidic residues; sequence KSMDMAERGLDTG. 4 consecutive CBS domains span residues 59–118, 125–183, 225–285, and 293–350; these read RLSK…NVEE, MTKN…RAAE, IIPD…LPPS, and MTQN…AGTT. The disordered stretch occupies residues 372–393; sequence LSPNEDDEDSRSESSMKVASEA. The PB1 domain maps to 402–489; it reads ANTFSFKIED…KSLRLHLDDS (88 aa). Residues 518–538 form a helical membrane-spanning segment; that stretch reads AYSGVAAGAALVAGLGFMAFL.

The protein localises to the membrane. In Arabidopsis thaliana (Mouse-ear cress), this protein is CBS domain-containing protein CBSCBSPB1 (CBSCBSPB1).